The chain runs to 414 residues: FAD-dependent monooxygenase adaC (414 aa).

The FAD site is built by Glu32, Ala43, Arg115, Asp325, and Gly338.

It belongs to the paxM FAD-dependent monooxygenase family. Requires FAD as cofactor.

The catalysed reaction is 3-(2,4-dioxopentyl)-3,6,8,9-tetrahydroxy-1-oxo-1,2,3,4-tetrahydroanthracene-2-carboxyl-[ACP] + NADPH + O2 + H(+) = 3-(2,4-dioxopentyl)-2,3,6,8,9-pentahydroxy-1-oxo-1,2,3,4-tetrahydroanthracene-2-carboxyl-[ACP] + NADP(+) + H2O. Its pathway is secondary metabolite biosynthesis. In terms of biological role, FAD-dependent monooxygenase; part of the gene cluster that mediates the biosynthesis of the linear tetracyclic TAN-1612 neuropeptide Y receptor antagonist. The decaketide backbone of TAN-1612 is synthesized by the non-reducing polyketide synthase adaA via condensation of one acetyl-CoA starter unit with 9 malonyl-CoA units. The FAD-dependent monooxygenase adaC then performs hydroxylation at C2 while the polaketide chain is still attached to the NRPKS adaA. The alpha-hydroxylation step at C2 appears to be crucial for the following C18-C1 Claisen cyclization and release of the C9-hydroxyl version of TAN-1612 from the NRPKS adaA, two steps performed by the lactamase-like protein adaB. Finally, the O-methyltransferase adaD performs the C9 O-methylation to complete the biosynthesis of TAN-1612. The polypeptide is FAD-dependent monooxygenase adaC (Aspergillus niger (strain ATCC MYA-4892 / CBS 513.88 / FGSC A1513)).